The sequence spans 119 residues: Probable prefoldin subunit 6 (119 aa).

This sequence belongs to the prefoldin subunit beta family. As to quaternary structure, heterohexamer of two PFD-alpha type and four PFD-beta type subunits. May interact with MSP1.

Binds specifically to cytosolic chaperonin (c-CPN) and transfers target proteins to it. Binds to nascent polypeptide chain and promotes folding in an environment in which there are many competing pathways for nonnative proteins. This is Probable prefoldin subunit 6 from Plasmodium falciparum (isolate 3D7).